The sequence spans 81 residues: Neurotoxin LmNaTx11.1 (81 aa).

An N-terminal signal peptide occupies residues 1–18 (MKIVIIFFIAMMAVGVYS). An LCN-type CS-alpha/beta domain is found at 19 to 80 (KDGYLVKKNG…PTYPSSKTCS (62 aa)). 4 disulfide bridges follow: Cys29–Cys79, Cys33–Cys56, Cys42–Cys61, and Cys46–Cys63.

This sequence belongs to the long (4 C-C) scorpion toxin superfamily. Sodium channel inhibitor family. Beta subfamily. In terms of tissue distribution, expressed by the venom gland.

Its subcellular location is the secreted. Binds voltage-independently at site-4 of sodium channels (Nav) and shift the voltage of activation toward more negative potentials thereby affecting sodium channel activation and promoting spontaneous and repetitive firing. This Lychas mucronatus (Chinese swimming scorpion) protein is Neurotoxin LmNaTx11.1.